Consider the following 311-residue polypeptide: 4-diphosphocytidyl-2-C-methyl-D-erythritol kinase (311 aa).

Residue K10 is part of the active site. 105–115 (PVAGGMAGGSA) provides a ligand contact to ATP. Residue D146 is part of the active site.

Belongs to the GHMP kinase family. IspE subfamily.

It carries out the reaction 4-CDP-2-C-methyl-D-erythritol + ATP = 4-CDP-2-C-methyl-D-erythritol 2-phosphate + ADP + H(+). It functions in the pathway isoprenoid biosynthesis; isopentenyl diphosphate biosynthesis via DXP pathway; isopentenyl diphosphate from 1-deoxy-D-xylulose 5-phosphate: step 3/6. Catalyzes the phosphorylation of the position 2 hydroxy group of 4-diphosphocytidyl-2C-methyl-D-erythritol. The protein is 4-diphosphocytidyl-2-C-methyl-D-erythritol kinase of Corynebacterium glutamicum (strain ATCC 13032 / DSM 20300 / JCM 1318 / BCRC 11384 / CCUG 27702 / LMG 3730 / NBRC 12168 / NCIMB 10025 / NRRL B-2784 / 534).